The following is a 341-amino-acid chain: Flap endonuclease 1 (341 aa).

An N-domain region spans residues 1–98; sequence MGVQIGELIP…RELEKRREAR (98 aa). Residues D27, D80, E152, E154, D173, D175, and D236 each coordinate Mg(2+). The interval 116–258 is I-domain; it reads EAKKYAMRAT…KALTIVKRTK (143 aa). The segment at 330 to 338 is interaction with PCNA; the sequence is KQSTLESWF.

This sequence belongs to the XPG/RAD2 endonuclease family. FEN1 subfamily. As to quaternary structure, interacts with PCNA. PCNA stimulates the nuclease activity without altering cleavage specificity. Requires Mg(2+) as cofactor.

Its function is as follows. Structure-specific nuclease with 5'-flap endonuclease and 5'-3' exonuclease activities involved in DNA replication and repair. During DNA replication, cleaves the 5'-overhanging flap structure that is generated by displacement synthesis when DNA polymerase encounters the 5'-end of a downstream Okazaki fragment. Binds the unpaired 3'-DNA end and kinks the DNA to facilitate 5' cleavage specificity. Cleaves one nucleotide into the double-stranded DNA from the junction in flap DNA, leaving a nick for ligation. Also involved in the base excision repair (BER) pathway. Acts as a genome stabilization factor that prevents flaps from equilibrating into structures that lead to duplications and deletions. Also possesses 5'-3' exonuclease activity on nicked or gapped double-stranded DNA. This is Flap endonuclease 1 from Thermococcus onnurineus (strain NA1).